The following is an 871-amino-acid chain: Protein translocase subunit SecA (871 aa).

ATP-binding positions include glutamine 80, glycine 98–threonine 102, and aspartate 537. Residues methionine 852–arginine 871 are disordered. Positions glycine 855–arginine 871 are enriched in basic residues.

Belongs to the SecA family. Monomer and homodimer. Part of the essential Sec protein translocation apparatus which comprises SecA, SecYEG and auxiliary proteins SecDF. Other proteins may also be involved.

The protein localises to the cell inner membrane. The protein resides in the cytoplasm. The enzyme catalyses ATP + H2O + cellular proteinSide 1 = ADP + phosphate + cellular proteinSide 2.. Its function is as follows. Part of the Sec protein translocase complex. Interacts with the SecYEG preprotein conducting channel. Has a central role in coupling the hydrolysis of ATP to the transfer of proteins into and across the cell membrane, serving as an ATP-driven molecular motor driving the stepwise translocation of polypeptide chains across the membrane. This chain is Protein translocase subunit SecA, found in Thermotoga neapolitana (strain ATCC 49049 / DSM 4359 / NBRC 107923 / NS-E).